The sequence spans 314 residues: Olfactory receptor 1E5 (314 aa).

At 1 to 25 (MMGQNQTSISDFLLLGLPIQPEQQN) the chain is on the extracellular side. Asn-5 carries an N-linked (GlcNAc...) asparagine glycan. The chain crosses the membrane as a helical span at residues 26-49 (LCYALFLAMYLTTLLGNLLIIVLI). Over 50–57 (RLDSHLHT) the chain is Cytoplasmic. The chain crosses the membrane as a helical span at residues 58–79 (PMYLFLSNLSFSDLCFSSVTIP). Residues 80–100 (KLLQNMQNQDPSIPYADCLTQ) are Extracellular-facing. Cys-97 and Cys-189 are oxidised to a cystine. Residues 101 to 120 (MYFFLLFGDLESFLLVAMAY) traverse the membrane as a helical segment. At 121–139 (DRYVAICFPLHYTAIMSPM) the chain is on the cytoplasmic side. A helical transmembrane segment spans residues 140–158 (LCLSLVALSWVLTTFHAML). The Extracellular segment spans residues 159–196 (HTLLMARLCFCADNVIPHFFCDMSALLKLACSDTRVNE). Residues 197-219 (WVIFIMGGLIVVIPFLLILGSYA) traverse the membrane as a helical segment. Residues 220-236 (RIVSSILKVPSSKGICK) lie on the Cytoplasmic side of the membrane. A helical transmembrane segment spans residues 237 to 260 (AFSTCGSHLSVVSLFYGTIIGLYL). At 261-272 (CPSANSSTLKET) the chain is on the extracellular side. The N-linked (GlcNAc...) asparagine glycan is linked to Asn-265. A helical membrane pass occupies residues 273–292 (VMAMMYTVVTPMLNPFIYSL). Topologically, residues 293-314 (RNRDMKGALERVIXKRKNPFLL) are cytoplasmic.

This sequence belongs to the G-protein coupled receptor 1 family.

It is found in the cell membrane. In terms of biological role, odorant receptor. In Pan troglodytes (Chimpanzee), this protein is Olfactory receptor 1E5 (OR1E5).